The chain runs to 986 residues: Translation initiation factor IF-2 (986 aa).

The disordered stretch occupies residues 47–388 (SAPAQTPHKE…RSKGRKGKYE (342 aa)). The span at 53-64 (PHKEVSQEEVRV) shows a compositional bias: basic and acidic residues. The segment covering 78-94 (PEAASAEAASAPAAQEE) has biased composition (low complexity). Basic and acidic residues predominate over residues 95 to 113 (APQKAEPEKVEAEKAEAPK). 2 stretches are compositionally biased toward low complexity: residues 127–141 (EAAP…PAEA) and 153–214 (APVA…QAPA). Composition is skewed to basic and acidic residues over residues 215 to 225 (KAEEQEPEKAT) and 268 to 278 (GVERPGTERPA). Over residues 286-300 (PAGAPGRPGERPTTG) the composition is skewed to low complexity. The segment covering 358–374 (GKKDSFKDILDKRERVF) has biased composition (basic and acidic residues). In terms of domain architecture, tr-type G spans 486–653 (KRPPVVTIMG…MVLLQADVLE (168 aa)). The interval 495–502 (GHVDHGKT) is G1. 495 to 502 (GHVDHGKT) is a GTP binding site. Residues 520–524 (GITQH) are G2. The G3 stretch occupies residues 541–544 (DTPG). Residues 541–545 (DTPGH) and 595–598 (NKID) each bind GTP. The segment at 595–598 (NKID) is G4. A G5 region spans residues 631-633 (SAK).

This sequence belongs to the TRAFAC class translation factor GTPase superfamily. Classic translation factor GTPase family. IF-2 subfamily.

Its subcellular location is the cytoplasm. Its function is as follows. One of the essential components for the initiation of protein synthesis. Protects formylmethionyl-tRNA from spontaneous hydrolysis and promotes its binding to the 30S ribosomal subunits. Also involved in the hydrolysis of GTP during the formation of the 70S ribosomal complex. This chain is Translation initiation factor IF-2, found in Citrifermentans bemidjiense (strain ATCC BAA-1014 / DSM 16622 / JCM 12645 / Bem) (Geobacter bemidjiensis).